The chain runs to 467 residues: Dimethylamine methyltransferase MtbB1 (467 aa).

A non-standard amino acid (pyrrolysine) is located at residue Pyl356.

The protein belongs to the dimethylamine methyltransferase family. May form homotetramers or homopentamers.

It carries out the reaction Co(I)-[dimethylamine-specific corrinoid protein] + dimethylamine + H(+) = methyl-Co(III)-[dimethylamine-specific corrinoid protein] + methylamine. Its pathway is one-carbon metabolism; methanogenesis from dimethylamine. Its function is as follows. Catalyzes the transfer of a methyl group from dimethylamine to the corrinoid cofactor of MtbC. The major or perhaps only DMA methyltransferase expressed under inducing conditions. This is Dimethylamine methyltransferase MtbB1 from Methanosarcina barkeri.